Reading from the N-terminus, the 179-residue chain is Adenine phosphoribosyltransferase (179 aa).

The protein belongs to the purine/pyrimidine phosphoribosyltransferase family. In terms of assembly, homodimer.

It is found in the cytoplasm. The enzyme catalyses AMP + diphosphate = 5-phospho-alpha-D-ribose 1-diphosphate + adenine. The protein operates within purine metabolism; AMP biosynthesis via salvage pathway; AMP from adenine: step 1/1. Catalyzes a salvage reaction resulting in the formation of AMP, that is energically less costly than de novo synthesis. In Histophilus somni (strain 129Pt) (Haemophilus somnus), this protein is Adenine phosphoribosyltransferase.